Consider the following 67-residue polypeptide: MPRTRECDYCGTDIEPGTGTMFVHKDGATTHFCSSKCENNADLGREARNLEWTDTARGEAGEAEDEA.

Zn(2+) contacts are provided by Cys7, Cys10, Cys33, and Cys37. Residues 7–37 (CDYCGTDIEPGTGTMFVHKDGATTHFCSSKC) form a C4-type zinc finger. Residues 48-60 (RNLEWTDTARGEA) show a composition bias toward basic and acidic residues. The disordered stretch occupies residues 48–67 (RNLEWTDTARGEAGEAEDEA).

Belongs to the eukaryotic ribosomal protein eL24 family. In terms of assembly, part of the 50S ribosomal subunit. Forms a cluster with proteins L3 and L14. It depends on Zn(2+) as a cofactor.

Functionally, binds to the 23S rRNA. In Haloarcula marismortui (strain ATCC 43049 / DSM 3752 / JCM 8966 / VKM B-1809) (Halobacterium marismortui), this protein is Large ribosomal subunit protein eL24 (rpl24e).